Reading from the N-terminus, the 260-residue chain is Kallikrein-8 (260 aa).

Residues 1–28 (MGRPRPRAAKTWMFLLLLGGAWAGHSRA) form the signal peptide. The propeptide occupies 29–32 (QEDK). The region spanning 33–257 (VLGGHECQPH…YLDWIKKIIG (225 aa)) is the Peptidase S1 domain. 6 cysteine pairs are disulfide-bonded: Cys-39–Cys-173, Cys-58–Cys-74, Cys-145–Cys-246, Cys-152–Cys-218, Cys-184–Cys-198, and Cys-208–Cys-233. Catalysis depends on His-73, which acts as the Charge relay system. The N-linked (GlcNAc...) asparagine glycan is linked to Asn-110. The active-site Charge relay system is the Asp-120. Ser-212 (charge relay system) is an active-site residue.

Belongs to the peptidase S1 family. Kallikrein subfamily. Interacts with SPINK9. Isoform 1 is predominantly expressed in the pancreas. Isoform 2 is expressed in adult brain and hippocampus. Isoform 1 and isoform 2 are found in fetal brain and placenta. Detected in salivary gland, uterus, thymus, breast, testis and kidney but not in spleen, liver, lung or normal ovarian tissue. Displays an 11.5-fold increase in Alzheimer disease hippocampus compared to controls and is overexpressed in some ovarian carcinomas. Expressed at low levels in normal skin while high levels are found in psoriasis vulgaris, seborrheic keratosis, lichen planus and squamous cell carcinoma skin samples. Expressed in the keratinocytes.

It is found in the secreted. It localises to the cytoplasm. The catalysed reaction is Cleavage of amide substrates following the basic amino acids Arg or Lys at the P1 position, with a preference for Arg over Lys.. Its activity is regulated as follows. Inhibited by a range of serine protease inhibitors including antipain, aprotinin, leupeptin, benzamidine and soybean trypsin inhibitor. Serine protease which is capable of degrading a number of proteins such as casein, fibrinogen, kininogen, fibronectin and collagen type IV. Also cleaves L1CAM in response to increased neural activity. Induces neurite outgrowth and fasciculation of cultured hippocampal neurons. Plays a role in the formation and maturation of orphan and small synaptic boutons in the Schaffer-collateral pathway, regulates Schaffer-collateral long-term potentiation in the hippocampus and is required for memory acquisition and synaptic plasticity. Involved in skin desquamation and keratinocyte proliferation. Plays a role in the secondary phase of pathogenesis following spinal cord injury. This chain is Kallikrein-8 (KLK8), found in Homo sapiens (Human).